Consider the following 65-residue polypeptide: MIALSVCWQIVRYLCRIRQMXGLNAIEHSNYLRNYMGHLRQKLEQDPARPRHFITETGIGYRFML.

A DNA-binding region (ompR/PhoB-type) is located at residues 1–65 (MIALSVCWQI…ETGIGYRFML (65 aa)).

This is an uncharacterized protein from Escherichia coli (strain K12).